The sequence spans 542 residues: Glutamyl-tRNA reductase 2, chloroplastic (542 aa).

Substrate-binding positions include 142-145 (TCNR), S202, 207-209 (EGQ), and Q213. C143 serves as the catalytic Nucleophile. NADP(+) is bound at residue 284–289 (GAGKMG).

The protein belongs to the glutamyl-tRNA reductase family. In terms of tissue distribution, found in all tissues examined.

It localises to the plastid. It is found in the chloroplast. It carries out the reaction (S)-4-amino-5-oxopentanoate + tRNA(Glu) + NADP(+) = L-glutamyl-tRNA(Glu) + NADPH + H(+). Its pathway is porphyrin-containing compound metabolism; protoporphyrin-IX biosynthesis; 5-aminolevulinate from L-glutamyl-tRNA(Glu): step 1/2. Its function is as follows. Catalyzes the NADPH-dependent reduction of glutamyl-tRNA(Glu) to glutamate 1-semialdehyde (GSA). The chain is Glutamyl-tRNA reductase 2, chloroplastic (HEMA2) from Cucumis sativus (Cucumber).